A 177-amino-acid polypeptide reads, in one-letter code: UPF0178 protein TP_0845 (177 aa).

The tract at residues 155-177 is disordered; that stretch reads EAKTGEEQCDWPSAQGKSQTGRR.

It belongs to the UPF0178 family.

In Treponema pallidum (strain Nichols), this protein is UPF0178 protein TP_0845.